The primary structure comprises 308 residues: Inosose dehydratase (308 aa).

The protein belongs to the IolE/MocC family. Glutathione is required as a cofactor. It depends on Co(2+) as a cofactor. Requires Mn(2+) as cofactor.

The enzyme catalyses scyllo-inosose = 3D-3,5/4-trihydroxycyclohexane-1,2-dione + H2O. Its pathway is polyol metabolism; myo-inositol degradation into acetyl-CoA; acetyl-CoA from myo-inositol: step 2/7. Its function is as follows. Catalyzes the dehydration of inosose (2-keto-myo-inositol, 2KMI or 2,4,6/3,5-pentahydroxycyclohexanone) to 3D-(3,5/4)-trihydroxycyclohexane-1,2-dione (D-2,3-diketo-4-deoxy-epi-inositol). The chain is Inosose dehydratase from Geobacillus kaustophilus (strain HTA426).